Here is a 293-residue protein sequence, read N- to C-terminus: Epidermal growth factor-like protein 8 (293 aa).

A signal peptide spans 1–25; that stretch reads MGSRAELCTLLGGFSFLLLLIPGEG. The EMI domain occupies 34–112; sequence SQGVCSKQTL…RHPGALTCEA (79 aa). 9 disulfide bridges follow: cysteine 38/cysteine 97, cysteine 65/cysteine 71, cysteine 96/cysteine 110, cysteine 114/cysteine 124, cysteine 118/cysteine 130, cysteine 132/cysteine 141, cysteine 148/cysteine 159, cysteine 155/cysteine 168, and cysteine 170/cysteine 183. Asparagine 50 is a glycosylation site (N-linked (GlcNAc...) asparagine). In terms of domain architecture, EGF-like 1 spans 111–142; sequence EAICAKPCLNGGVCVRPDQCECAPGWGGKHCH. In terms of domain architecture, EGF-like 2; calcium-binding spans 144-184; it reads DVDECRTSITLCSHHCFNTAGSFTCGCPHDLVLGVDGRTCM. Positions 195-232 form a coiled coil; sequence SILSVAVREAEKDERALKQEIHELRGRLERLEQWAGQA.

It localises to the secreted. The protein is Epidermal growth factor-like protein 8 (EGFL8) of Homo sapiens (Human).